The chain runs to 547 residues: RING finger protein ETP1 homolog (547 aa).

Residues 208–248 form an RING-type zinc finger; it reads CVVCLERMDSSITGLITIVCQHTFHCPCLQKWGNSSCPVCR. The UBP-type; degenerate zinc-finger motif lies at 245–338; the sequence is PVCRYTQKVQ…GKLVELSTDG (94 aa). C262, C265, C274, C277, C282, H289, H293, and H299 together coordinate Zn(2+). Residues 514 to 523 show a composition bias toward polar residues; the sequence is LPNNSTVRSN. Positions 514 to 547 are disordered; the sequence is LPNNSTVRSNSVKSKKKKKKKPVVPSSSGSLGTD. Basic residues predominate over residues 526–535; sequence KSKKKKKKKP.

Its subcellular location is the cytoplasm. Functionally, may act as a cytoplasmic retention protein with a role in regulating nuclear transport. This Schizosaccharomyces pombe (strain 972 / ATCC 24843) (Fission yeast) protein is RING finger protein ETP1 homolog.